Reading from the N-terminus, the 445-residue chain is Glucose-6-phosphate isomerase (445 aa).

E284 (proton donor) is an active-site residue. Residues H305 and K419 contribute to the active site.

Belongs to the GPI family.

Its subcellular location is the cytoplasm. It carries out the reaction alpha-D-glucose 6-phosphate = beta-D-fructose 6-phosphate. The protein operates within carbohydrate biosynthesis; gluconeogenesis. It participates in carbohydrate degradation; glycolysis; D-glyceraldehyde 3-phosphate and glycerone phosphate from D-glucose: step 2/4. In terms of biological role, catalyzes the reversible isomerization of glucose-6-phosphate to fructose-6-phosphate. This is Glucose-6-phosphate isomerase from Leptospira borgpetersenii serovar Hardjo-bovis (strain JB197).